The following is a 722-amino-acid chain: Delta-like protein 1 (722 aa).

The first 17 residues, 1 to 17, serve as a signal peptide directing secretion; sequence MGRRSALALAVVSALLC. Residues 18–545 lie on the Extracellular side of the membrane; that stretch reads QVWSSGVFEL…MESQGGPFPW (528 aa). One can recognise a DSL domain in the interval 176–220; sequence FVCDEHYYGEGCSVFCRPRDDAFGHFTCGDRGEKMCDPGWKGQYC. Intrachain disulfides connect Cys-178–Cys-187, Cys-191–Cys-203, Cys-211–Cys-220, Cys-225–Cys-236, Cys-229–Cys-242, Cys-244–Cys-253, Cys-256–Cys-267, Cys-262–Cys-273, Cys-275–Cys-284, Cys-291–Cys-303, Cys-297–Cys-313, Cys-315–Cys-324, Cys-331–Cys-342, Cys-336–Cys-351, Cys-353–Cys-362, Cys-369–Cys-380, Cys-374–Cys-390, Cys-392–Cys-401, Cys-408–Cys-419, Cys-413–Cys-428, Cys-430–Cys-439, Cys-446–Cys-457, Cys-451–Cys-466, Cys-468–Cys-477, Cys-484–Cys-495, Cys-489–Cys-504, and Cys-506–Cys-515. EGF-like domains lie at 225–253, 256–284, and 291–324; these read CLPG…GRYC, CIRY…GLFC, and CTHH…GANC. The EGF-like 4; calcium-binding domain occupies 331-362; that stretch reads CAPSPCKNGASCTDLEDSFSCTCPPGFYGKVC. 2 consecutive EGF-like domains span residues 369-401 and 408-439; these read CADG…GFNC and CGSS…GRYC. One can recognise an EGF-like 7; calcium-binding domain in the interval 446 to 477; the sequence is CASSPCANGGTCRDSVNDFSCTCPPGYTGKNC. Asn-476 carries N-linked (GlcNAc...) asparagine glycosylation. Residues 484–515 enclose the EGF-like 8 domain; sequence CEHAPCHNGATCHQRGQRYMCECAQGYGGPNC. Residues 546–568 form a helical membrane-spanning segment; the sequence is VAVCAGVVLVLLLLLGCAAVVVC. The Cytoplasmic segment spans residues 569–722; the sequence is VRLKLQKHQP…KDECVIATEV (154 aa). Lys-613 is covalently cross-linked (Glycyl lysine isopeptide (Lys-Gly) (interchain with G-Cter in ubiquitin)). Thr-638 carries the phosphothreonine modification. A compositionally biased stretch (basic and acidic residues) spans 655–664; sequence RDTHSKRDTK. A disordered region spans residues 655 to 697; that stretch reads RDTHSKRDTKCQSQSSAGEEKIAPTLRGGEIPDRKRPESVYST. The residue at position 693 (Ser-693) is a Phosphoserine; by PKB. A Phosphoserine modification is found at Ser-696. The segment at 719-722 is interaction with MAGI1; sequence ATEV.

As to quaternary structure, homodimer. Interacts with TJP1. Interacts with MMP14; inhibits DLL1-induced Notch signaling. Interacts with MAGI1 (via PDZ domain); forms a complex with CTNNB1 and CDH2 and promotes recruitment to the adherens junction and stabilization on the cell surface. Interacts with PSEN1; undergoes a presenilin-dependent gamma-secretase cleavage that releases a Dll1-intracellular form. Interacts with MFAP5. Interacts with MIB1. Interacts with NEURL1B; leads to ubiquitination. Interacts with NEURL1. Interacts with SYNJ2BP; enhances DLL1 protein stability, and promotes Notch signaling in endothelial cells. Interacts with MAGI1, MAGI2, MAGI3 and MPDZ. Interacts (via ubiquitin) with EPN1 (via IUM domain); binding with NOTCH1 attached to neighboring cell, promotes ligand ubiquitination and EPN1 interaction, leading to NECD transendocytosis and Notch signaling. Interacts with NOTCH1. Post-translationally, ubiquitinated by MIB (MIB1 or MIB2), leading to its endocytosis and subsequent degradation. Ubiquitinated; promotes recycling back to the plasma membrane and confers a strong affinity for NOTCH1. Multi-ubiquitination of Lys-613 by MIB1 promotes both cis and trans-interaction with NOTCH1, as well as activation of Notch signaling. Ubiquitinated by NEURL1B. In terms of processing, phosphorylated in a membrane association-dependent manner. Phosphorylation at Ser-696 requires the presence of Ser-693, whereas phosphorylation at Thr-638 and Ser-693 occurs independently of the other sites. Phosphorylation is required for full ligand activity in vitro and affects surface presentation, ectodomain shedding, and endocytosis. Cleaved by MMP14; negatively regulates DLL1-induced Notch signaling in HPCs, modulating B-lymphocyte differentiation in bone marrow. Undergoes two consecutive processing events: a shedding event, partially by ADAM10, that generates a soluble extracellular form and an intracellular membrane-anchored form, followed by a gamma-secretase cleavage releasing an intracellular fragment. Post-translationally, O-fucosylated. Can be elongated to a disaccharide by MFNG. In terms of tissue distribution, in the embryo, expressed in the paraxial mesoderm and nervous system. Expressed at high levels in adult heart and at lower levels, in adult lung. Highly expressed in satellite cells from masseter and tongue than in satellite cells from leg and extraocular muscle.?.

The protein localises to the apical cell membrane. It localises to the cell junction. Its subcellular location is the adherens junction. The protein resides in the membrane raft. It is found in the cell membrane. The protein localises to the nucleus. Functionally, transmembrane ligand protein of NOTCH1, NOTCH2 and NOTCH3 receptors that binds the extracellular domain (ECD) of Notch receptor in a cis and trans fashion manner. Following transinteraction, ligand cells produce mechanical force that depends of a clathrin-mediated endocytosis, requiring ligand ubiquitination, EPN1 interaction, and actin polymerisation; these events promote Notch receptor extracellular domain (NECD) transendocytosis and triggers Notch signaling through induction of cleavage, hyperphosphorylation, and nuclear accumulation of the intracellular domain of Notch receptors (NICD). Is required for embryonic development and maintenance of adult stem cells in many different tissues and immune systeme; the DLL1-induced Notch signaling is mediated through an intercellular communication that regulates cell lineage, cell specification, cell patterning and morphogenesis through effects on differentiation and proliferation. Plays a role in brain development at different level, namely by regulating neuronal differentiation of neural precursor cells via cell-cell interaction, most likely through the lateral inhibitory system in an endogenous level dependent-manner. During neocortex development, Dll1-Notch signaling transmission is mediated by dynamic interactions between intermediate neurogenic progenitors and radial glia; the cell-cell interactions are mediated via dynamic and transient elongation processes, likely to reactivate/maintain Notch activity in neighboring progenitors, and coordinate progenitor cell division and differentiation across radial and zonal boundaries. During cerebellar development, regulates Bergmann glial monolayer formation and its morphological maturation through a Notch signaling pathway. At the retina and spinal cord level, regulates neurogenesis by preventing the premature differentiation of neural progenitors and also by maintaining progenitors in spinal cord through Notch signaling pathway. Also controls neurogenesis of the neural tube in a progenitor domain-specific fashion along the dorsoventral axis. Maintains quiescence of neural stem cells and plays a role as a fate determinant that segregates asymmetrically to one daughter cell during neural stem cells mitosis, resulting in neuronal differentiation in Dll1-inheriting cell. Plays a role in immune systeme development, namely the development of all T-cells and marginal zone (MZ) B cells. Blocks the differentiation of progenitor cells into the B-cell lineage while promoting the emergence of a population of cells with the characteristics of a T-cell/NK-cell precursor. Upon MMP14 cleavage, negatively regulates Notch signaling in haematopoietic progenitor cells to specifically maintain normal B-cell development in bone marrow. Also plays a role during muscle development. During early development, inhibits myoblasts differentiation from the medial dermomyotomal lip and later regulates progenitor cell differentiation. Directly modulates cell adhesion and basal lamina formation in satellite cells through Notch signaling. Maintains myogenic progenitors pool by suppressing differentiation through down-regulation of MYOD1 and is required for satellite cell homing and PAX7 expression. During craniofacial and trunk myogenesis suppresses differentiation of cranial mesoderm-derived and somite-derived muscle via MYOD1 regulation but in cranial mesoderm-derived progenitors, is neither required for satellite cell homing nor for PAX7 expression. Also plays a role during pancreatic cell development. During type B pancreatic cell development, may be involved in the initiation of proximodistal patterning in the early pancreatic epithelium. Stimulates multipotent pancreatic progenitor cells proliferation and pancreatic growth by maintaining HES1 expression and PTF1A protein levels. During fetal stages of development, is required to maintain arterial identity and the responsiveness of arterial endothelial cells for VEGFA through regulation of KDR activation and NRP1 expression. Controls sprouting angiogenesis and subsequent vertical branch formation through regulation on tip cell differentiation. Negatively regulates goblet cell differentiation in intestine and controls secretory fat commitment through lateral inhibition in small intestine. Plays a role during inner ear development; negatively regulates auditory hair cell differentiation. Plays a role during nephron development through Notch signaling pathway. Regulates growth, blood pressure and energy homeostasis. In Mus musculus (Mouse), this protein is Delta-like protein 1 (Dll1).